The following is an 81-amino-acid chain: Conotoxin Im6.1 (81 aa).

The first 20 residues, 1–20, serve as a signal peptide directing secretion; the sequence is MSKLGVVLFTLLLLVPLVTP. Positions 21–47 are excised as a propeptide; sequence ERDGGKWTMLAKNKKAMKRNLMDFITR. 3 cysteine pairs are disulfide-bonded: cysteine 49–cysteine 61, cysteine 54–cysteine 67, and cysteine 60–cysteine 76.

The protein belongs to the conotoxin M superfamily. As to expression, expressed by the venom duct.

Its subcellular location is the secreted. This Conus imperialis (Imperial cone) protein is Conotoxin Im6.1.